A 117-amino-acid polypeptide reads, in one-letter code: Cuticle protein CP1243 (117 aa).

4 repeat units span residues 1-17 (NYGE…LVQF), 26-43 (AEIG…HVQF), 67-84 (QPYG…NRQF), and 93-110 (VLVG…NVQF).

As to expression, calcified shell.

This Cancer pagurus (Rock crab) protein is Cuticle protein CP1243.